The following is a 163-amino-acid chain: Crossover junction endodeoxyribonuclease RuvC (163 aa).

Active-site residues include Asp-9, Glu-76, and Asp-148. Mg(2+) contacts are provided by Asp-9, Glu-76, and Asp-148.

This sequence belongs to the RuvC family. As to quaternary structure, homodimer which binds Holliday junction (HJ) DNA. The HJ becomes 2-fold symmetrical on binding to RuvC with unstacked arms; it has a different conformation from HJ DNA in complex with RuvA. In the full resolvosome a probable DNA-RuvA(4)-RuvB(12)-RuvC(2) complex forms which resolves the HJ. The cofactor is Mg(2+).

It localises to the cytoplasm. It carries out the reaction Endonucleolytic cleavage at a junction such as a reciprocal single-stranded crossover between two homologous DNA duplexes (Holliday junction).. Functionally, the RuvA-RuvB-RuvC complex processes Holliday junction (HJ) DNA during genetic recombination and DNA repair. Endonuclease that resolves HJ intermediates. Cleaves cruciform DNA by making single-stranded nicks across the HJ at symmetrical positions within the homologous arms, yielding a 5'-phosphate and a 3'-hydroxyl group; requires a central core of homology in the junction. The consensus cleavage sequence is 5'-(A/T)TT(C/G)-3'. Cleavage occurs on the 3'-side of the TT dinucleotide at the point of strand exchange. HJ branch migration catalyzed by RuvA-RuvB allows RuvC to scan DNA until it finds its consensus sequence, where it cleaves and resolves the cruciform DNA. The sequence is that of Crossover junction endodeoxyribonuclease RuvC from Nostoc punctiforme (strain ATCC 29133 / PCC 73102).